A 518-amino-acid chain; its full sequence is Forkhead box protein H1 (518 aa).

The disordered stretch occupies residues 72–113 (GSMYGLSPGTHEGSCTHTHEGPKDSMAGDQTRSRKSKKKNYH). Positions 104 to 113 (SRKSKKKNYH) are enriched in basic residues. A DNA-binding region (fork-head) is located at residues 117 to 213 (KPPYSYLAMI…MKLQNTALTR (97 aa)). The interval 318 to 397 (KPTRNARSPG…NYSPIEPPKK (80 aa)) is disordered. Over residues 329–346 (STIHSTYSSSSSSISTIS) the composition is skewed to low complexity. Residues 380–506 (TSSDPDTGNY…PSFLSQCLGS (127 aa)) are SMAD-interaction domain (SID). Positions 405–409 (LPTSY) match the Fast/FoxH1 motif 1 (FM1) motif. Positions 415–421 (PNVVAPP) match the Fast/FoxH1 motif 2 (FM2) motif. The SMAD interaction motif (SIM) signature appears at 470–491 (LDNMLRAMPPNKSVFDVLTSHP).

In terms of assembly, ARF1 contains 2 smad2s, 1 smad4 and 1 foxh1/fast-1 protein. Interaction with smad4 is most likely indirect through interaction with the MH2 domain of smad2. Binds to the MH2 domain of smad3, which can incorporate into the ARF1 complex. The ARF1 and ARF2 complexes are activated by distinct TGF-beta family members; formation of ARF1 is promoted by activin. Interacts (via Fork-head domain) with gtf2ird1/wbscr11 (via repeats 4-5). In terms of tissue distribution, highly expressed in the animal cap (prospective ectoderm) and prospective mesoderm of stage 10.25 embryos.

Its subcellular location is the nucleus. In terms of biological role, transcriptional activator. Recognizes and binds to the DNA sequence 5'-TGT[GT][GT]ATT-3'. Upon TGF-beta induction, forms a transcriptionally active complex with smad2 and smad4 called activin-responsive factor 1 (ARF1), which binds a site on the mix-B/mix.2 promoter called the activin response element (ARE). Binds to activated smads and the ARE with much lower affinity than fast3. Necessary for the first steps in mesoderm specification, directly inducing mesodermal genes. Acts with fast3 to control the convergent extension movements of gastrulation. Binds to the proximal element (PE) of the gsc gene and cooperates with gtf2ird1/wbscr11 and SMAD proteins to regulate gsc transcription. This is Forkhead box protein H1 (foxh1) from Xenopus laevis (African clawed frog).